Here is a 337-residue protein sequence, read N- to C-terminus: LIX1-like protein (337 aa).

Positions 1 to 64 are disordered; that stretch reads METMRAQRLQ…PLLLSGAPGL (64 aa). Residues 26 to 38 are compositionally biased toward low complexity; it reads PGVTGAAAATATP. The segment covering 39 to 56 has biased composition (pro residues); it reads PAGPPPAPPPPAPPPPPL.

This sequence belongs to the LIX1 family.

This is LIX1-like protein (LIX1L) from Homo sapiens (Human).